We begin with the raw amino-acid sequence, 437 residues long: Glutamyl-tRNA reductase (437 aa).

Substrate is bound by residues 49-52 (TCNR), serine 109, 114-116 (EVQ), and glutamine 120. The active-site Nucleophile is cysteine 50. An NADP(+)-binding site is contributed by 189-194 (GAGDTA).

This sequence belongs to the glutamyl-tRNA reductase family. Homodimer.

The catalysed reaction is (S)-4-amino-5-oxopentanoate + tRNA(Glu) + NADP(+) = L-glutamyl-tRNA(Glu) + NADPH + H(+). Its pathway is porphyrin-containing compound metabolism; protoporphyrin-IX biosynthesis; 5-aminolevulinate from L-glutamyl-tRNA(Glu): step 1/2. It participates in porphyrin-containing compound metabolism; chlorophyll biosynthesis. Functionally, catalyzes the NADPH-dependent reduction of glutamyl-tRNA(Glu) to glutamate 1-semialdehyde (GSA). The chain is Glutamyl-tRNA reductase from Chloroherpeton thalassium (strain ATCC 35110 / GB-78).